A 208-amino-acid polypeptide reads, in one-letter code: Glutathione S-transferase P (208 aa).

The 78-residue stretch at 1–78 folds into the GST N-terminal domain; the sequence is MTLKLTYFDI…HLARLNGLNG (78 aa). Glutathione contacts are provided by residues Tyr-7, Trp-38, Lys-42, 49–50, and 62–63; these read QV and QS. The 123-residue stretch at 80-202 folds into the GST C-terminal domain; sequence NETETTFIDM…NKRAAINPPV (123 aa).

It belongs to the GST superfamily. Pi family. Homodimer. As to expression, expressed in dopaminergic (DA) neuron (at protein levels).

The catalysed reaction is RX + glutathione = an S-substituted glutathione + a halide anion + H(+). Conjugation of reduced glutathione to a wide number of exogenous and endogenous hydrophobic electrophiles. Prevents dopaminergic CEP neuron degeneration in response to Mn(2+). The polypeptide is Glutathione S-transferase P (gst-1) (Caenorhabditis elegans).